Consider the following 270-residue polypeptide: 4-hydroxy-tetrahydrodipicolinate reductase (270 aa).

Residues 11–16 (GAGGRM) and glutamate 37 contribute to the NAD(+) site. NADP(+) is bound at residue arginine 38. Residues 101–103 (GTT) and 125–128 (APNM) contribute to the NAD(+) site. Histidine 158 functions as the Proton donor/acceptor in the catalytic mechanism. Position 159 (histidine 159) interacts with (S)-2,3,4,5-tetrahydrodipicolinate. Residue lysine 162 is the Proton donor of the active site. 168 to 169 (GT) provides a ligand contact to (S)-2,3,4,5-tetrahydrodipicolinate.

This sequence belongs to the DapB family.

Its subcellular location is the cytoplasm. The enzyme catalyses (S)-2,3,4,5-tetrahydrodipicolinate + NAD(+) + H2O = (2S,4S)-4-hydroxy-2,3,4,5-tetrahydrodipicolinate + NADH + H(+). It catalyses the reaction (S)-2,3,4,5-tetrahydrodipicolinate + NADP(+) + H2O = (2S,4S)-4-hydroxy-2,3,4,5-tetrahydrodipicolinate + NADPH + H(+). It participates in amino-acid biosynthesis; L-lysine biosynthesis via DAP pathway; (S)-tetrahydrodipicolinate from L-aspartate: step 4/4. Catalyzes the conversion of 4-hydroxy-tetrahydrodipicolinate (HTPA) to tetrahydrodipicolinate. The sequence is that of 4-hydroxy-tetrahydrodipicolinate reductase from Shewanella sp. (strain W3-18-1).